The chain runs to 861 residues: Bifunctional uridylyltransferase/uridylyl-removing enzyme (861 aa).

Residues 1–322 (MHTAAAATPA…FPTELGITRT (322 aa)) form a uridylyltransferase region. The tract at residues 323 to 679 (INGRFVERQG…ARISPVGEGL (357 aa)) is uridylyl-removing. The 117-residue stretch at 441–557 (VDQHILMVVR…RHFADQVGSE (117 aa)) folds into the HD domain. 2 consecutive ACT domains span residues 680-763 (QVAV…AEPP) and 792-861 (LLSL…ALAI).

This sequence belongs to the GlnD family. The cofactor is Mg(2+).

It carries out the reaction [protein-PII]-L-tyrosine + UTP = [protein-PII]-uridylyl-L-tyrosine + diphosphate. The enzyme catalyses [protein-PII]-uridylyl-L-tyrosine + H2O = [protein-PII]-L-tyrosine + UMP + H(+). Its activity is regulated as follows. Uridylyltransferase (UTase) activity is inhibited by glutamine, while glutamine activates uridylyl-removing (UR) activity. Modifies, by uridylylation and deuridylylation, the PII regulatory proteins (GlnB and homologs), in response to the nitrogen status of the cell that GlnD senses through the glutamine level. Under low glutamine levels, catalyzes the conversion of the PII proteins and UTP to PII-UMP and PPi, while under higher glutamine levels, GlnD hydrolyzes PII-UMP to PII and UMP (deuridylylation). Thus, controls uridylylation state and activity of the PII proteins, and plays an important role in the regulation of nitrogen assimilation and metabolism. The chain is Bifunctional uridylyltransferase/uridylyl-removing enzyme from Ralstonia nicotianae (strain ATCC BAA-1114 / GMI1000) (Ralstonia solanacearum).